The following is a 239-amino-acid chain: mRNA turnover protein 4 homolog (239 aa).

Positions 216–239 are disordered; sequence QQMDDDLPESAPESEGESEEEDDS. The segment covering 218-239 has biased composition (acidic residues); that stretch reads MDDDLPESAPESEGESEEEDDS. Phosphoserine is present on residues Ser-225, Ser-229, and Ser-233.

It belongs to the universal ribosomal protein uL10 family. As to quaternary structure, associates with the pre-60S ribosomal particle. Interacts with MINAS-60 (product of an alternative open reading frame of RBM10).

It is found in the nucleus. It localises to the nucleolus. Its subcellular location is the cytoplasm. In terms of biological role, component of the ribosome assembly machinery. Nuclear paralog of the ribosomal protein P0, it binds pre-60S subunits at an early stage of assembly in the nucleolus, and is replaced by P0 in cytoplasmic pre-60S subunits and mature 80S ribosomes. This Mus musculus (Mouse) protein is mRNA turnover protein 4 homolog (Mrto4).